A 131-amino-acid polypeptide reads, in one-letter code: NADPH-dependent 7-cyano-7-deazaguanine reductase (131 aa).

The active-site Thioimide intermediate is the cysteine 47. The Proton donor role is filled by aspartate 54. Substrate-binding positions include 69–71 (MEL) and 88–89 (HE).

It belongs to the GTP cyclohydrolase I family. QueF type 1 subfamily.

The protein localises to the cytoplasm. It catalyses the reaction 7-aminomethyl-7-carbaguanine + 2 NADP(+) = 7-cyano-7-deazaguanine + 2 NADPH + 3 H(+). The protein operates within tRNA modification; tRNA-queuosine biosynthesis. Functionally, catalyzes the NADPH-dependent reduction of 7-cyano-7-deazaguanine (preQ0) to 7-aminomethyl-7-deazaguanine (preQ1). In Microcystis aeruginosa (strain NIES-843 / IAM M-2473), this protein is NADPH-dependent 7-cyano-7-deazaguanine reductase.